The sequence spans 272 residues: Zinc transporter ZupT (272 aa).

8 helical membrane-spanning segments follow: residues 12-32 (ALAV…MVVF), 40-60 (LLAF…LSEI), 76-96 (LGFT…MVID), 126-146 (LLTA…TFFA), 158-178 (AFAI…PVYF), 187-207 (FGAS…GYLL), 211-231 (VLSE…MVFL), and 247-267 (HETV…LVLF). The Fe(2+) site is built by asparagine 136 and glutamate 139. The Zn(2+) site is built by glutamate 139 and histidine 164. Residues asparagine 165, glutamate 168, and glutamate 197 each coordinate Fe(2+). Residue glutamate 168 participates in Zn(2+) binding.

Belongs to the ZIP transporter (TC 2.A.5) family. ZupT subfamily.

Its subcellular location is the cell inner membrane. The catalysed reaction is Zn(2+)(in) = Zn(2+)(out). In terms of biological role, mediates zinc uptake. May also transport other divalent cations. In Xanthomonas campestris pv. campestris (strain ATCC 33913 / DSM 3586 / NCPPB 528 / LMG 568 / P 25), this protein is Zinc transporter ZupT.